The chain runs to 387 residues: 1-deoxy-D-xylulose 5-phosphate reductoisomerase (387 aa).

Positions 11, 12, 13, 14, 37, 39, and 123 each coordinate NADPH. Lysine 124 is a binding site for 1-deoxy-D-xylulose 5-phosphate. Glutamate 125 serves as a coordination point for NADPH. Aspartate 147 contacts Mn(2+). 4 residues coordinate 1-deoxy-D-xylulose 5-phosphate: serine 148, glutamate 149, serine 173, and histidine 196. Glutamate 149 provides a ligand contact to Mn(2+). Residue glycine 202 participates in NADPH binding. 1-deoxy-D-xylulose 5-phosphate is bound by residues serine 209, asparagine 214, lysine 215, and glutamate 218. Glutamate 218 is a Mn(2+) binding site.

This sequence belongs to the DXR family. It depends on Mg(2+) as a cofactor. Mn(2+) is required as a cofactor.

The catalysed reaction is 2-C-methyl-D-erythritol 4-phosphate + NADP(+) = 1-deoxy-D-xylulose 5-phosphate + NADPH + H(+). The protein operates within isoprenoid biosynthesis; isopentenyl diphosphate biosynthesis via DXP pathway; isopentenyl diphosphate from 1-deoxy-D-xylulose 5-phosphate: step 1/6. Functionally, catalyzes the NADPH-dependent rearrangement and reduction of 1-deoxy-D-xylulose-5-phosphate (DXP) to 2-C-methyl-D-erythritol 4-phosphate (MEP). The sequence is that of 1-deoxy-D-xylulose 5-phosphate reductoisomerase from Corynebacterium diphtheriae (strain ATCC 700971 / NCTC 13129 / Biotype gravis).